Reading from the N-terminus, the 197-residue chain is 3-isopropylmalate dehydratase small subunit (197 aa).

This sequence belongs to the LeuD family. LeuD type 1 subfamily. In terms of assembly, heterodimer of LeuC and LeuD.

It carries out the reaction (2R,3S)-3-isopropylmalate = (2S)-2-isopropylmalate. It functions in the pathway amino-acid biosynthesis; L-leucine biosynthesis; L-leucine from 3-methyl-2-oxobutanoate: step 2/4. In terms of biological role, catalyzes the isomerization between 2-isopropylmalate and 3-isopropylmalate, via the formation of 2-isopropylmaleate. In Azobacteroides pseudotrichonymphae genomovar. CFP2, this protein is 3-isopropylmalate dehydratase small subunit.